Reading from the N-terminus, the 1175-residue chain is DNA-directed RNA polymerase subunit beta (1175 aa).

Positions 1-24 (MEGSLLVASSASNNETANNVESTD) are disordered. Residues 7–23 (VASSASNNETANNVEST) show a composition bias toward low complexity.

This sequence belongs to the RNA polymerase beta chain family. As to quaternary structure, the RNAP catalytic core consists of 2 alpha, 1 beta, 1 beta' and 1 omega subunit. When a sigma factor is associated with the core the holoenzyme is formed, which can initiate transcription.

The catalysed reaction is RNA(n) + a ribonucleoside 5'-triphosphate = RNA(n+1) + diphosphate. Its function is as follows. DNA-dependent RNA polymerase catalyzes the transcription of DNA into RNA using the four ribonucleoside triphosphates as substrates. The sequence is that of DNA-directed RNA polymerase subunit beta from Renibacterium salmoninarum (strain ATCC 33209 / DSM 20767 / JCM 11484 / NBRC 15589 / NCIMB 2235).